The following is a 196-amino-acid chain: Protein/nucleic acid deglycase 3 (196 aa).

The Nucleophile role is filled by Cys106. At Cys106 the chain carries Cysteine sulfinic acid (-SO2H); alternate.

The protein belongs to the peptidase C56 family. As to quaternary structure, homodimer. In terms of processing, cys-106 is easily oxidized to sulfinic acid.

The enzyme catalyses N(omega)-(1-hydroxy-2-oxopropyl)-L-arginyl-[protein] + H2O = lactate + L-arginyl-[protein] + H(+). It catalyses the reaction N(6)-(1-hydroxy-2-oxopropyl)-L-lysyl-[protein] + H2O = lactate + L-lysyl-[protein] + H(+). The catalysed reaction is S-(1-hydroxy-2-oxopropyl)-L-cysteinyl-[protein] + H2O = lactate + L-cysteinyl-[protein] + H(+). It carries out the reaction N(omega)-(1-hydroxy-2-oxoethyl)-L-arginyl-[protein] + H2O = L-arginyl-[protein] + glycolate + H(+). The enzyme catalyses N(6)-(1-hydroxy-2-oxoethyl)-L-lysyl-[protein] + H2O = glycolate + L-lysyl-[protein] + H(+). It catalyses the reaction S-(1-hydroxy-2-oxoethyl)-L-cysteinyl-[protein] + H2O = glycolate + L-cysteinyl-[protein] + H(+). The catalysed reaction is N(2)-(1-hydroxy-2-oxopropyl)-dGTP + H2O = lactate + dGTP + H(+). It carries out the reaction N(2)-(1-hydroxy-2-oxopropyl)-GTP + H2O = lactate + GTP + H(+). The enzyme catalyses N(2)-(1-hydroxy-2-oxopropyl)-GDP + H2O = lactate + GDP + H(+). It catalyses the reaction N(2)-(1-hydroxy-2-oxopropyl)-GMP + H2O = lactate + GMP + H(+). The catalysed reaction is N(2)-(1-hydroxy-2-oxoethyl)-dGTP + H2O = dGTP + glycolate + H(+). It carries out the reaction N(2)-(1-hydroxy-2-oxoethyl)-GTP + H2O = glycolate + GTP + H(+). The enzyme catalyses N(2)-(1-hydroxy-2-oxoethyl)-GDP + H2O = glycolate + GDP + H(+). It catalyses the reaction N(2)-(1-hydroxy-2-oxoethyl)-GMP + H2O = glycolate + GMP + H(+). The catalysed reaction is an N(2)-(1-hydroxy-2-oxopropyl)-guanosine in RNA + H2O = a guanosine in RNA + lactate + H(+). It carries out the reaction an N(2)-(1-hydroxy-2-oxopropyl)-2'-deoxyguanosine in DNA + H2O = a 2'-deoxyguanosine in DNA + lactate + H(+). The enzyme catalyses an N(2)-(1-hydroxy-2-oxoethyl)-guanosine in RNA + H2O = a guanosine in RNA + glycolate + H(+). It catalyses the reaction an N(2)-(1-hydroxy-2-oxoethyl)-2'-deoxyguanosine in DNA + H2O = a 2'-deoxyguanosine in DNA + glycolate + H(+). Glyoxalase activity is inhibited by zinc ions. Active as a chaperone in both its reduced and oxidized states, and is more active in its oxidized form. Its function is as follows. Protein and nucleotide deglycase that catalyzes the deglycation of the Maillard adducts formed between amino groups of proteins or nucleotides and reactive carbonyl groups of glyoxals. Thus, functions as a protein deglycase that repairs methylglyoxal- and glyoxal-glycated proteins, and releases repaired proteins and lactate or glycolate, respectively. Deglycates cysteine, arginine and lysine residues in proteins, and thus reactivates these proteins by reversing glycation by glyoxals. Is able to repair glycated serum albumin, collagen, glyceraldehyde-3-phosphate dehydrogenase, and fructose biphosphate aldolase. Acts on early glycation intermediates (hemithioacetals and aminocarbinols), preventing the formation of Schiff bases and advanced glycation endproducts (AGE) that cause irreversible damage. Also functions as a nucleotide deglycase able to repair glycated guanine in the free nucleotide pool (GTP, GDP, GMP, dGTP) and in DNA and RNA. Is thus involved in a major nucleotide repair system named guanine glycation repair (GG repair), dedicated to reversing methylglyoxal and glyoxal damage via nucleotide sanitization and direct nucleic acid repair. However, is less efficient than Hsp31 and YhbO, suggesting that YajL might be preferentially dedicated to protein repair. Displays a covalent chaperone activity with sulfenylated thiol proteins by forming mixed disulfides with members of the thiol proteome, and preferentially with sulfenylated cellular proteins, upon oxidative stress; these mixed disulfides can be subsequently reduced by low-molecular-weight thiols to regenerate YajL and reduced proteins. Involved in biogenesis of ribosomal proteins, probably as a ribosomal protein-folding chaperone. Confers resistance to oxidative stress. Plays an important role in protection against electrophile/carbonyl stress. The chaperone activity reported for YajL is probably recruited to execute its deglycase activity, to interact with non-native glycated proteins and gain access to partially buried glycated sites. Also displays an apparent glyoxalase activity that in fact reflects its deglycase activity. This chain is Protein/nucleic acid deglycase 3 (yajL), found in Escherichia coli (strain K12).